The primary structure comprises 123 residues: Large ribosomal subunit protein uL14 (123 aa).

Belongs to the universal ribosomal protein uL14 family. Part of the 50S ribosomal subunit. Forms a cluster with proteins L3 and L19. In the 70S ribosome, L14 and L19 interact and together make contacts with the 16S rRNA in bridges B5 and B8.

Binds to 23S rRNA. Forms part of two intersubunit bridges in the 70S ribosome. The polypeptide is Large ribosomal subunit protein uL14 (Corynebacterium urealyticum (strain ATCC 43042 / DSM 7109)).